A 331-amino-acid chain; its full sequence is Pantothenate kinase (331 aa).

109–116 (GSVAVGKS) contributes to the ATP binding site.

The protein belongs to the prokaryotic pantothenate kinase family.

It localises to the cytoplasm. It carries out the reaction (R)-pantothenate + ATP = (R)-4'-phosphopantothenate + ADP + H(+). It participates in cofactor biosynthesis; coenzyme A biosynthesis; CoA from (R)-pantothenate: step 1/5. This is Pantothenate kinase from Sinorhizobium medicae (strain WSM419) (Ensifer medicae).